The chain runs to 142 residues: Protein SprT-like (142 aa).

Positions 4 to 138 (YVKKVSIEDF…FACGYCHGRL (135 aa)) constitute a SprT-like domain. A Zn(2+)-binding site is contributed by H62. The active site involves E63. A Zn(2+)-binding site is contributed by H66.

Belongs to the SprT family. Requires Zn(2+) as cofactor.

It localises to the cytoplasm. The sequence is that of Protein SprT-like from Streptococcus agalactiae serotype Ia (strain ATCC 27591 / A909 / CDC SS700).